The sequence spans 57 residues: Large ribosomal subunit protein eL20 (57 aa).

This sequence belongs to the eukaryotic ribosomal protein eL20 family. In terms of assembly, part of the 50S ribosomal subunit. Binds 23S rRNA.

This Natronomonas pharaonis (strain ATCC 35678 / DSM 2160 / CIP 103997 / JCM 8858 / NBRC 14720 / NCIMB 2260 / Gabara) (Halobacterium pharaonis) protein is Large ribosomal subunit protein eL20.